The following is a 142-amino-acid chain: Phosphoribosyl-AMP cyclohydrolase (142 aa).

Aspartate 92 provides a ligand contact to Mg(2+). A Zn(2+)-binding site is contributed by cysteine 93. The Mg(2+) site is built by aspartate 94 and aspartate 96. The Zn(2+) site is built by cysteine 109 and cysteine 116.

Belongs to the PRA-CH family. Homodimer. The cofactor is Mg(2+). It depends on Zn(2+) as a cofactor.

It localises to the cytoplasm. It carries out the reaction 1-(5-phospho-beta-D-ribosyl)-5'-AMP + H2O = 1-(5-phospho-beta-D-ribosyl)-5-[(5-phospho-beta-D-ribosylamino)methylideneamino]imidazole-4-carboxamide. Its pathway is amino-acid biosynthesis; L-histidine biosynthesis; L-histidine from 5-phospho-alpha-D-ribose 1-diphosphate: step 3/9. Its function is as follows. Catalyzes the hydrolysis of the adenine ring of phosphoribosyl-AMP. The protein is Phosphoribosyl-AMP cyclohydrolase of Halorhodospira halophila (strain DSM 244 / SL1) (Ectothiorhodospira halophila (strain DSM 244 / SL1)).